A 161-amino-acid chain; its full sequence is Nucleotide-binding protein Shew185_3601 (161 aa).

This sequence belongs to the YajQ family.

Functionally, nucleotide-binding protein. The chain is Nucleotide-binding protein Shew185_3601 from Shewanella baltica (strain OS185).